A 469-amino-acid chain; its full sequence is Dihydroorotate dehydrogenase (quinone), mitochondrial (469 aa).

The N-terminal 37 residues, 1–37 (MSSSAAALAWRRSLRDALLRGSAWRGAPAANSAAARL), are a transit peptide targeting the mitochondrion. Residues 62–82 (LLTGAMIGLAIAGGAYVSTAD) form a helical membrane-spanning segment. FMN is bound by residues 150-154 (AGFDK) and S174. K154 provides a ligand contact to substrate. 199 to 203 (NRCGF) contacts substrate. The tract at residues 219-247 (HGKRKMEETSSSTSPTTSDVKQGGKAGPG) is disordered. The segment covering 227-236 (TSSSTSPTTS) has biased composition (low complexity). Positions 252 and 283 each coordinate FMN. 283-288 (NVSSPN) is a binding site for substrate. The Nucleophile role is filled by S286. Residues K328 and S356 each coordinate FMN. Residue 357–358 (NT) coordinates substrate. FMN is bound by residues G380, G409, and 430–431 (YT).

The protein belongs to the dihydroorotate dehydrogenase family. Type 2 subfamily. Requires FMN as cofactor.

It localises to the mitochondrion inner membrane. It carries out the reaction (S)-dihydroorotate + a quinone = orotate + a quinol. It functions in the pathway pyrimidine metabolism; UMP biosynthesis via de novo pathway; orotate from (S)-dihydroorotate (quinone route): step 1/1. In terms of biological role, catalyzes the conversion of dihydroorotate to orotate with quinone as electron acceptor. The sequence is that of Dihydroorotate dehydrogenase (quinone), mitochondrial (PYRD) from Oryza sativa subsp. japonica (Rice).